The chain runs to 457 residues: Chromosomal replication initiator protein DnaA (457 aa).

Positions 1-71 (MSPSIWEKCL…LLKNFCNINT (71 aa)) are domain I, interacts with DnaA modulators. Residues 71–119 (TTPTLMLKICKPKIIQKKFFNELTLKKNILNSKLTYNVNTKLSNIIYSS) are domain II. A domain III, AAA+ region region spans residues 120 to 337 (EINTNYTFQN…GALNKILANS (218 aa)). ATP contacts are provided by G165, G167, K168, and T169. The interval 338–457 (DSKKKIITIN…FLTLLKILSS (120 aa)) is domain IV, binds dsDNA.

Belongs to the DnaA family. In terms of assembly, oligomerizes as a right-handed, spiral filament on DNA at oriC.

It localises to the cytoplasm. Functionally, plays an essential role in the initiation and regulation of chromosomal replication. ATP-DnaA binds to the origin of replication (oriC) to initiate formation of the DNA replication initiation complex once per cell cycle. Binds the DnaA box (a 9 base pair repeat at the origin) and separates the double-stranded (ds)DNA. Forms a right-handed helical filament on oriC DNA; dsDNA binds to the exterior of the filament while single-stranded (ss)DNA is stabiized in the filament's interior. The ATP-DnaA-oriC complex binds and stabilizes one strand of the AT-rich DNA unwinding element (DUE), permitting loading of DNA polymerase. After initiation quickly degrades to an ADP-DnaA complex that is not apt for DNA replication. Binds acidic phospholipids. This is Chromosomal replication initiator protein DnaA from Buchnera aphidicola subsp. Baizongia pistaciae (strain Bp).